The sequence spans 579 residues: CTP synthase (579 aa).

Residues Met1 to Leu281 form an amidoligase domain region. Ser23 serves as a coordination point for CTP. Ser23 serves as a coordination point for UTP. Residues Ser24 to Leu29 and Asp81 each bind ATP. The Mg(2+) site is built by Asp81 and Glu155. CTP-binding positions include Asp162 to Glu164, Lys202 to Gln207, and Lys238. Residues Lys202–Gln207 and Lys238 each bind UTP. The 249-residue stretch at Arg306–Ala554 folds into the Glutamine amidotransferase type-1 domain. Gly369 lines the L-glutamine pocket. Residue Cys396 is the Nucleophile; for glutamine hydrolysis of the active site. L-glutamine-binding positions include Leu397–Gln400, Glu419, and Arg480. Catalysis depends on residues His527 and Glu529.

It belongs to the CTP synthase family. Homotetramer.

The enzyme catalyses UTP + L-glutamine + ATP + H2O = CTP + L-glutamate + ADP + phosphate + 2 H(+). It carries out the reaction L-glutamine + H2O = L-glutamate + NH4(+). The catalysed reaction is UTP + NH4(+) + ATP = CTP + ADP + phosphate + 2 H(+). It functions in the pathway pyrimidine metabolism; CTP biosynthesis via de novo pathway; CTP from UDP: step 2/2. Allosterically activated by GTP, when glutamine is the substrate; GTP has no effect on the reaction when ammonia is the substrate. The allosteric effector GTP functions by stabilizing the protein conformation that binds the tetrahedral intermediate(s) formed during glutamine hydrolysis. Inhibited by the product CTP, via allosteric rather than competitive inhibition. Functionally, catalyzes the ATP-dependent amination of UTP to CTP with either L-glutamine or ammonia as the source of nitrogen. Regulates intracellular CTP levels through interactions with the four ribonucleotide triphosphates. This Mycobacterium sp. (strain KMS) protein is CTP synthase.